The primary structure comprises 98 residues: DNA-binding protein Fis (98 aa).

A DNA-binding region (H-T-H motif) is located at residues 74–93 (QTRAATMMGINRGTLRKKLK).

Belongs to the transcriptional regulatory Fis family. In terms of assembly, homodimer.

Activates ribosomal RNA transcription. Plays a direct role in upstream activation of rRNA promoters. This chain is DNA-binding protein Fis, found in Photobacterium profundum (strain SS9).